The chain runs to 187 residues: Pyridoxal 5'-phosphate synthase subunit PdxT (187 aa).

47-49 (GES) contributes to the L-glutamine binding site. Catalysis depends on cysteine 76, which acts as the Nucleophile. L-glutamine contacts are provided by residues arginine 102 and 128-129 (IR). Catalysis depends on charge relay system residues histidine 165 and glutamate 167.

Belongs to the glutaminase PdxT/SNO family. In the presence of PdxS, forms a dodecamer of heterodimers. Only shows activity in the heterodimer.

The enzyme catalyses aldehydo-D-ribose 5-phosphate + D-glyceraldehyde 3-phosphate + L-glutamine = pyridoxal 5'-phosphate + L-glutamate + phosphate + 3 H2O + H(+). It catalyses the reaction L-glutamine + H2O = L-glutamate + NH4(+). It participates in cofactor biosynthesis; pyridoxal 5'-phosphate biosynthesis. Catalyzes the hydrolysis of glutamine to glutamate and ammonia as part of the biosynthesis of pyridoxal 5'-phosphate. The resulting ammonia molecule is channeled to the active site of PdxS. This Methanococcus maripaludis (strain C7 / ATCC BAA-1331) protein is Pyridoxal 5'-phosphate synthase subunit PdxT.